A 621-amino-acid polypeptide reads, in one-letter code: Pentatricopeptide repeat-containing protein At1g12620 (621 aa).

16 PPR repeats span residues 36–70, 71–105, 106–140, 141–175, 176–210, 211–245, 246–280, 281–315, 316–350, 351–385, 386–420, 421–455, 456–490, 491–525, 526–560, and 561–595; these read GKVS…RPRP, RLID…GIAH, NLYT…GYEP, DTVT…GHKP, TLIT…GFQP, NEVT…KIKL, DAVK…GFKA, DIII…KITP, DVVA…GISP, DTVT…GCGP, NIRT…GVVA, DTVT…RVRP, DIVS…KMEL, DIGI…GVKP, DVKT…GHSP, and NGCT…GFSV.

The protein belongs to the PPR family. P subfamily.

This Arabidopsis thaliana (Mouse-ear cress) protein is Pentatricopeptide repeat-containing protein At1g12620.